The chain runs to 545 residues: Chaperonin GroEL 2 (545 aa).

Residues T30 to P33, K51, D87 to T91, G415, N479 to A481, and D495 each bind ATP.

It belongs to the chaperonin (HSP60) family. In terms of assembly, forms a cylinder of 14 subunits composed of two heptameric rings stacked back-to-back. Interacts with the co-chaperonin GroES.

Its subcellular location is the cytoplasm. It catalyses the reaction ATP + H2O + a folded polypeptide = ADP + phosphate + an unfolded polypeptide.. In terms of biological role, together with its co-chaperonin GroES, plays an essential role in assisting protein folding. The GroEL-GroES system forms a nano-cage that allows encapsulation of the non-native substrate proteins and provides a physical environment optimized to promote and accelerate protein folding. This Escherichia coli O1:K1 / APEC protein is Chaperonin GroEL 2.